The sequence spans 392 residues: Phosphoglycerate kinase (392 aa).

Substrate-binding positions include Asp-19 to Asn-21, Arg-35, His-58 to Arg-61, Arg-117, and Arg-150. Residues Lys-201, Glu-323, and Gly-349–Ser-352 each bind ATP.

Belongs to the phosphoglycerate kinase family. Monomer.

The protein localises to the cytoplasm. The catalysed reaction is (2R)-3-phosphoglycerate + ATP = (2R)-3-phospho-glyceroyl phosphate + ADP. Its pathway is carbohydrate degradation; glycolysis; pyruvate from D-glyceraldehyde 3-phosphate: step 2/5. This Desulfotalea psychrophila (strain LSv54 / DSM 12343) protein is Phosphoglycerate kinase.